Reading from the N-terminus, the 780-residue chain is Replication origin-binding protein (780 aa).

The region spanning 39 to 195 (SFENVRQPIK…AAFKPDTQIA (157 aa)) is the Helicase ATP-binding domain. 52–59 (AAMGSGKT) contributes to the ATP binding site.

Belongs to the herpesviridae OriBP family.

Probably involved in DNA replication. Binds the origin of replication (ori). The protein is Replication origin-binding protein (U73) of Human herpesvirus 6A (strain Uganda-1102) (HHV-6 variant A).